Here is a 534-residue protein sequence, read N- to C-terminus: BEN domain-containing protein 4 (534 aa).

3 disordered regions span residues 1–24 (MEEE…RSPY), 48–128 (ELPH…AASS), and 287–322 (VHTL…EEGY). The span at 53–63 (RAPPPPPPPFA) shows a compositional bias: pro residues. Residues 69–83 (SISSSEPPPQQFQAQ) are compositionally biased toward polar residues. A compositionally biased stretch (low complexity) spans 91–109 (GRAAAAASSSSPSCTPATS). Residues 295–310 (SPATSESHGHPSSSTL) show a composition bias toward polar residues. Residues 311-321 (PEEEEEEDEEG) show a composition bias toward acidic residues. Positions 324 to 351 (PRCQELEQEVISLQQENEELRRKLESIP) form a coiled coil. In terms of domain architecture, BEN spans 390–498 (NYPVYITSKQ…DAVGHARQGR (109 aa)).

This chain is BEN domain-containing protein 4 (BEND4), found in Homo sapiens (Human).